The sequence spans 1334 residues: Aldehyde oxidase 4 (1334 aa).

The 88-residue stretch at 6–93 folds into the 2Fe-2S ferredoxin-type domain; it reads DELIFFVNGK…GAAVTTVEGV (88 aa). [2Fe-2S] cluster contacts are provided by Cys45, Cys50, Cys53, and Cys75. Gln114 is a Mo-molybdopterin binding site. [2Fe-2S] cluster is bound by residues Cys115, Cys118, Cys150, and Cys152. Cys152 serves as a coordination point for Mo-molybdopterin. The FAD-binding PCMH-type domain occupies 235–421; it reads FQGERTIWIM…LSVFIPYSGQ (187 aa). FAD contacts are provided by residues 263-270, Ala345, Thr354, His358, Asp367, and Ala411; that span reads LVMGNTAV. Mo-molybdopterin contacts are provided by residues Ala802, 802–803, Leu1043, 1084–1087, Gln1199, and Leu1263; these read AF and GSMG. Glu1265 serves as the catalytic Proton acceptor; for azaheterocycle hydroxylase activity.

This sequence belongs to the xanthine dehydrogenase family. As to quaternary structure, homodimer. [2Fe-2S] cluster is required as a cofactor. It depends on FAD as a cofactor. Mo-molybdopterin serves as cofactor.

Its subcellular location is the cytoplasm. It catalyses the reaction an aldehyde + O2 + H2O = a carboxylate + H2O2 + H(+). It carries out the reaction retinal + O2 + H2O = retinoate + H2O2 + H(+). In terms of biological role, aldehyde oxidase able to catalyze the oxidation of retinaldehyde into retinoate. Acts as a negative modulator of the epidermal trophism. May be able to oxidize a wide variety of aldehydes into their corresponding carboxylates and to hydroxylate azaheterocycles. The sequence is that of Aldehyde oxidase 4 (Aox4) from Rattus norvegicus (Rat).